Here is a 316-residue protein sequence, read N- to C-terminus: Pantothenate kinase (316 aa).

Residue 96–103 (GSVAVGKS) coordinates ATP.

The protein belongs to the prokaryotic pantothenate kinase family.

It localises to the cytoplasm. It catalyses the reaction (R)-pantothenate + ATP = (R)-4'-phosphopantothenate + ADP + H(+). Its pathway is cofactor biosynthesis; coenzyme A biosynthesis; CoA from (R)-pantothenate: step 1/5. The protein is Pantothenate kinase of Shouchella clausii (strain KSM-K16) (Alkalihalobacillus clausii).